A 254-amino-acid polypeptide reads, in one-letter code: Switch-activating protein 1 (254 aa).

Over residues 1 to 10 (MEAPKMELKS) the composition is skewed to basic and acidic residues. The disordered stretch occupies residues 1–30 (MEAPKMELKSYKRKNASLSPSSSPAKAQRT). Positions 16–25 (ASLSPSSSPA) are enriched in low complexity. Phosphoserine is present on residues Ser17 and Ser19. A run of 4 repeats spans residues 221–224 (GVNM), 225–228 (GTNM), 229–232 (GANM), and 233–236 (GANM). The tract at residues 221-236 (GVNMGTNMGANMGANM) is 4 X 4 AA tandem repeats of G-[ATV]-N-M.

As to quaternary structure, homodimer.

Its subcellular location is the nucleus. Binds to sequences required for mating-type switching. Makes a simultaneous contact with both the alpha and beta domains of the switch-activating site SAS1. Also binds to replication fork barrier 1 (RFB1) located within a 78 base pair sequence near the 3' end of the rRNA coding region. This leads to replication fork blockage. It binds the consensus sequence 5'-TA[AG]GCAGNTN[CT]AACG[AC]G-3'. Functionally, has a role in chromosome organization and integrity where it is involved in chromosome segregation. Has a role in sister chromatid cohesion and condensation. This is Switch-activating protein 1 (sap1) from Schizosaccharomyces pombe (strain 972 / ATCC 24843) (Fission yeast).